The primary structure comprises 486 residues: Ribulose bisphosphate carboxylase large chain (486 aa).

Residues N126 and T176 each coordinate substrate. K178 acts as the Proton acceptor in catalysis. K180 provides a ligand contact to substrate. Mg(2+) contacts are provided by K204, D206, and E207. K204 carries the N6-carboxylysine modification. Residue H296 is the Proton acceptor of the active site. The substrate site is built by R297, H329, and S381.

The protein belongs to the RuBisCO large chain family. Type I subfamily. Heterohexadecamer of 8 large chains and 8 small chains. Mg(2+) serves as cofactor.

It catalyses the reaction 2 (2R)-3-phosphoglycerate + 2 H(+) = D-ribulose 1,5-bisphosphate + CO2 + H2O. The catalysed reaction is D-ribulose 1,5-bisphosphate + O2 = 2-phosphoglycolate + (2R)-3-phosphoglycerate + 2 H(+). In terms of biological role, ruBisCO catalyzes two reactions: the carboxylation of D-ribulose 1,5-bisphosphate, the primary event in carbon dioxide fixation, as well as the oxidative fragmentation of the pentose substrate. Both reactions occur simultaneously and in competition at the same active site. The protein is Ribulose bisphosphate carboxylase large chain of Sinorhizobium medicae (strain WSM419) (Ensifer medicae).